The sequence spans 84 residues: U4-theraphotoxin-Hhn1b (84 aa).

The N-terminal stretch at 1 to 22 (MKVTLIAILTCAAVLVLHTTAA) is a signal peptide. Residues 23-47 (EELEESQLMEVGMPDTELAAVDEER) constitute a propeptide that is removed on maturation. Cystine bridges form between Cys51-Cys65, Cys55-Cys76, and Cys70-Cys81.

Belongs to the neurotoxin 12 (Hwtx-2) family. 02 (Hwtx-2) subfamily. Expressed by the venom gland.

It localises to the secreted. Postsynaptic neurotoxin. The sequence is that of U4-theraphotoxin-Hhn1b from Cyriopagopus hainanus (Chinese bird spider).